A 103-amino-acid chain; its full sequence is ATP-dependent Clp protease adapter protein ClpS (103 aa).

It belongs to the ClpS family. As to quaternary structure, binds to the N-terminal domain of the chaperone ClpA.

Its function is as follows. Involved in the modulation of the specificity of the ClpAP-mediated ATP-dependent protein degradation. In Nitrosomonas eutropha (strain DSM 101675 / C91 / Nm57), this protein is ATP-dependent Clp protease adapter protein ClpS.